We begin with the raw amino-acid sequence, 549 residues long: Vacuolar fusion protein MON1 homolog A (549 aa).

Disordered regions lie at residues 1 to 90 and 109 to 137; these read MAAD…EQIS and EEMR…GKEE. A compositionally biased stretch (basic and acidic residues) spans 110-119; the sequence is EMRQSQEGKL.

Belongs to the MON1/SAND family.

Functionally, plays an important role in membrane trafficking through the secretory apparatus. Not involved in endocytic trafficking to lysosomes. In Gallus gallus (Chicken), this protein is Vacuolar fusion protein MON1 homolog A (MON1A).